The sequence spans 123 residues: Large ribosomal subunit protein uL14 (123 aa).

The protein belongs to the universal ribosomal protein uL14 family. Part of the 50S ribosomal subunit. Forms a cluster with proteins L3 and L19. In the 70S ribosome, L14 and L19 interact and together make contacts with the 16S rRNA in bridges B5 and B8.

Its function is as follows. Binds to 23S rRNA. Forms part of two intersubunit bridges in the 70S ribosome. The sequence is that of Large ribosomal subunit protein uL14 from Aliivibrio salmonicida (strain LFI1238) (Vibrio salmonicida (strain LFI1238)).